Consider the following 455-residue polypeptide: tRNA modification GTPase MnmE (455 aa).

Residues K29, E91, and R131 each coordinate (6S)-5-formyl-5,6,7,8-tetrahydrofolate. Residues 226–378 form the TrmE-type G domain; it reads GLKVALVGLP…LIQELLKLAG (153 aa). N236 is a K(+) binding site. Residues 236 to 241, 255 to 261, 280 to 283, and 341 to 344 each bind GTP; these read NVGKSS, TDLPGTT, DTAG, and NKAD. S240 serves as a coordination point for Mg(2+). K(+)-binding residues include T255, L257, and T260. T261 is a Mg(2+) binding site. Position 455 (K455) interacts with (6S)-5-formyl-5,6,7,8-tetrahydrofolate.

The protein belongs to the TRAFAC class TrmE-Era-EngA-EngB-Septin-like GTPase superfamily. TrmE GTPase family. As to quaternary structure, homodimer. Heterotetramer of two MnmE and two MnmG subunits. It depends on K(+) as a cofactor.

The protein localises to the cytoplasm. Exhibits a very high intrinsic GTPase hydrolysis rate. Involved in the addition of a carboxymethylaminomethyl (cmnm) group at the wobble position (U34) of certain tRNAs, forming tRNA-cmnm(5)s(2)U34. This Prochlorococcus marinus (strain SARG / CCMP1375 / SS120) protein is tRNA modification GTPase MnmE.